We begin with the raw amino-acid sequence, 744 residues long: Elongation factor G, mitochondrial (744 aa).

The transit peptide at 1 to 33 (MTISNLIRSRCSLAAAKSFLENVKSFSSHATFA) directs the protein to the mitochondrion. A tr-type G domain is found at 39–317 (EKIRNIGISA…VLDYLPHPGE (279 aa)). Residues 48–55 (AHIDSGKT), 115–119 (DTPGH), and 169–172 (NKLD) each bind GTP.

Belongs to the TRAFAC class translation factor GTPase superfamily. Classic translation factor GTPase family. EF-G/EF-2 subfamily.

Its subcellular location is the mitochondrion. The protein operates within protein biosynthesis; polypeptide chain elongation. Functionally, mitochondrial GTPase that catalyzes the GTP-dependent ribosomal translocation step during translation elongation. During this step, the ribosome changes from the pre-translocational (PRE) to the post-translocational (POST) state as the newly formed A-site-bound peptidyl-tRNA and P-site-bound deacylated tRNA move to the P and E sites, respectively. Catalyzes the coordinated movement of the two tRNA molecules, the mRNA and conformational changes in the ribosome. The sequence is that of Elongation factor G, mitochondrial from Anopheles gambiae (African malaria mosquito).